The chain runs to 1379 residues: DNA-directed RNA polymerase subunit beta'' (1379 aa).

Zn(2+) is bound by residues C224, C295, C302, and C305. The interval 503 to 524 (SVQSLSVKRRSTSKLSETNDEA) is disordered.

Belongs to the RNA polymerase beta' chain family. RpoC2 subfamily. As to quaternary structure, in plastids the minimal PEP RNA polymerase catalytic core is composed of four subunits: alpha, beta, beta', and beta''. When a (nuclear-encoded) sigma factor is associated with the core the holoenzyme is formed, which can initiate transcription. Requires Zn(2+) as cofactor.

It is found in the plastid. It carries out the reaction RNA(n) + a ribonucleoside 5'-triphosphate = RNA(n+1) + diphosphate. In terms of biological role, DNA-dependent RNA polymerase catalyzes the transcription of DNA into RNA using the four ribonucleoside triphosphates as substrates. In Cuscuta exaltata (Tall dodder), this protein is DNA-directed RNA polymerase subunit beta''.